The primary structure comprises 85 residues: Large ribosomal subunit protein bL27 (85 aa).

The tract at residues M1 to G22 is disordered.

This sequence belongs to the bacterial ribosomal protein bL27 family.

The sequence is that of Large ribosomal subunit protein bL27 from Sulfurimonas denitrificans (strain ATCC 33889 / DSM 1251) (Thiomicrospira denitrificans (strain ATCC 33889 / DSM 1251)).